We begin with the raw amino-acid sequence, 335 residues long: Malate dehydrogenase (335 aa).

11 to 17 (GAAGQIG) is an NAD(+) binding site. Residues R94 and R100 each coordinate substrate. Residues N107, Q114, and 131 to 133 (VGN) contribute to the NAD(+) site. Positions 133 and 167 each coordinate substrate. The active-site Proton acceptor is H192.

It belongs to the LDH/MDH superfamily. MDH type 2 family.

The enzyme catalyses (S)-malate + NAD(+) = oxaloacetate + NADH + H(+). Functionally, catalyzes the reversible oxidation of malate to oxaloacetate. The protein is Malate dehydrogenase of Bdellovibrio bacteriovorus (strain ATCC 15356 / DSM 50701 / NCIMB 9529 / HD100).